We begin with the raw amino-acid sequence, 314 residues long: Glucocorticoid receptor (314 aa).

The interval 1-44 (ASAAVSAAPTEKEFPKTHSDVSSEQQNLKGQKGSNGGSMKLHTT) is disordered. The segment at 1–281 (ASAAVSAAPT…SAATGPPPKL (281 aa)) is modulating. The segment covering 10–21 (TEKEFPKTHSDV) has biased composition (basic and acidic residues). Phosphoserine is present on residues S65, S73, and S88. K120 is covalently cross-linked (Glycyl lysine isopeptide (Lys-Gly) (interchain with G-Cter in SUMO2)). A Phosphoserine modification is found at S129. Glycyl lysine isopeptide (Lys-Gly) (interchain with G-Cter in SUMO); alternate cross-links involve residues K139 and K155. Residues K139 and K155 each participate in a glycyl lysine isopeptide (Lys-Gly) (interchain with G-Cter in SUMO2); alternate cross-link. A Phosphoserine modification is found at S266. Residue K280 forms a Glycyl lysine isopeptide (Lys-Gly) (interchain with G-Cter in ubiquitin) linkage. An NR C4-type zinc finger spans residues 282–314 (CLVCSDEASGCHYGVLTCGSCKVFFKRAVEGQH). Positions 282–314 (CLVCSDEASGCHYGVLTCGSCKVFFKRAVEGQH) form a DNA-binding region, nuclear receptor.

The protein belongs to the nuclear hormone receptor family. NR3 subfamily. As to quaternary structure, heteromultimeric cytoplasmic complex with HSP90AA1, HSPA1A/HSPA1B, and FKBP5 or another immunophilin such as PPID, STIP1, or the immunophilin homolog PPP5C. Upon ligand binding FKBP5 dissociates from the complex and FKBP4 takes its place, thereby linking the complex to dynein and mediating transport to the nucleus, where the complex dissociates. Probably forms a complex composed of chaperones HSP90 and HSP70, co-chaperones CDC37, PPP5C, TSC1 and client protein TSC2, CDK4, AKT, RAF1 and NR3C1; this complex does not contain co-chaperones STIP1/HOP and PTGES3/p23. Directly interacts with UNC45A. Binds to DNA as a homodimer, and as heterodimer with NR3C2 or the retinoid X receptor. Binds STAT5A and STAT5B homodimers and heterodimers. Interacts with NRIP1, POU2F1, POU2F2 and TRIM28. Interacts with several coactivator complexes, including the SMARCA4 complex, CREBBP/EP300, TADA2L (Ada complex) and p160 coactivators such as NCOA2 and NCOA6. Interaction with BAG1 inhibits transactivation. Interacts with HEXIM1 and TGFB1I1. Interacts with NCOA1. Interacts with NCOA3, SMARCA4, SMARCC1, SMARCD1, and SMARCE1. Interacts with CLOCK, CRY1 and CRY2 in a ligand-dependent fashion. Interacts with CIART. Interacts with RWDD3. Interacts with UBE2I/UBC9 and this interaction is enhanced in the presence of RWDD3. Interacts with GRIP1. Interacts with NR4A3 (via nuclear receptor DNA-binding domain), represses transcription activity of NR4A3 on the POMC promoter Nur response element (NurRE). Directly interacts with PNRC2 to attract and form a complex with UPF1 and DCP1A; the interaction leads to rapid mRNA degradation. Interacts with GSK3B. Interacts with FNIP1 and FNIP2. Interacts (via C-terminus) with HNRNPU (via C-terminus). Interacts with MCM3AP. Interacts (via domain NR LBD) with HSP90AA1 and HSP90AB1. In the absence of hormonal ligand, interacts with TACC1. Interacts (via NR LBD domain) with ZNF764 (via KRAB domain); the interaction regulates transcription factor activity of NR3C1 by directing its actions toward certain biologic pathways. Post-translationally, acetylation by CLOCK reduces its binding to glucocorticoid response elements and its transcriptional activity. In terms of processing, increased proteasome-mediated degradation in response to glucocorticoids. Phosphorylated in the absence of hormone; becomes hyperphosphorylated in the presence of glucocorticoid. The Ser-65, Ser-88 and Ser-266-phosphorylated forms are mainly cytoplasmic, and the Ser-73-phosphorylated form is nuclear. Phosphorylation at Ser-73 increases transcriptional activity. Phosphorylation at Ser-65, Ser-88 and Ser-266 decreases signaling capacity. Phosphorylation at Ser-266 may protect from glucocorticoid-induced apoptosis. Phosphorylation at Ser-65 and Ser-73 is not required in regulation of chromosome segregation. May be dephosphorylated by PPP5C, attenuates NR3C1 action. Post-translationally, ubiquitinated by UBR5, leading to its degradation: UBR5 specifically recognizes and binds ligand-bound NR3C1 when it is not associated with coactivators (NCOAs). In presence of NCOAs, the UBR5-degron is not accessible, preventing its ubiquitination and degradation. In terms of processing, sumoylation at Lys-139 and Lys-155 negatively regulates its transcriptional activity. Heat shock increases sumoylation in a RWDD3-dependent manner.

It is found in the cytoplasm. The protein localises to the nucleus. Its subcellular location is the mitochondrion. The protein resides in the cytoskeleton. It localises to the spindle. It is found in the microtubule organizing center. The protein localises to the centrosome. Its subcellular location is the chromosome. The protein resides in the nucleoplasm. In terms of biological role, receptor for glucocorticoids (GC). Has a dual mode of action: as a transcription factor that binds to glucocorticoid response elements (GRE), both for nuclear and mitochondrial DNA, and as a modulator of other transcription factors. Affects inflammatory responses, cellular proliferation and differentiation in target tissues. Involved in chromatin remodeling. Plays a role in rapid mRNA degradation by binding to the 5' UTR of target mRNAs and interacting with PNRC2 in a ligand-dependent manner which recruits the RNA helicase UPF1 and the mRNA-decapping enzyme DCP1A, leading to RNA decay. Could act as a coactivator for STAT5-dependent transcription upon growth hormone (GH) stimulation and could reveal an essential role of hepatic GR in the control of body growth. Mediates glucocorticoid-induced apoptosis. Promotes accurate chromosome segregation during mitosis. May act as a tumor suppressor. May play a negative role in adipogenesis through the regulation of lipolytic and antilipogenic gene expression. This chain is Glucocorticoid receptor (NR3C1), found in Ovis aries (Sheep).